The sequence spans 3092 residues: Probable polyketide synthase 45 (3092 aa).

The Ketosynthase family 3 (KS3) domain occupies 10 to 430; that stretch reads DNDVAIIGIG…GSNVCLILTE (421 aa). Residues Cys170, His315, and His353 each act as for beta-ketoacyl synthase activity in the active site. The tract at residues 640 to 673 is acyl/malonyl transferase; that stretch reads GILASISIGHSLGEVSSAVCSGMIDLETGCFIIY. Ser650 serves as the catalytic For acyl/malonyl transferase activity. The interval 967-1087 is N-terminal hotdog fold; it reads INQLGNRNER…GKFSITKHND (121 aa). The region spanning 967-1254 is the PKS/mFAS DH domain; sequence INQLGNRNER…YTQLTPYKNQ (288 aa). Residue His999 is the Proton acceptor; for dehydratase activity of the active site. The interval 1103 to 1254 is C-terminal hotdog fold; that stretch reads NFVTIQKKEL…YTQLTPYKNQ (152 aa). The Proton donor; for dehydratase activity role is filled by Asp1165. The 79-residue stretch at 2566 to 2644 folds into the Carrier domain; that stretch reads SDDLSIREEI…QLIQSVTDAM (79 aa). Residue Ser2604 is modified to O-(pantetheine 4'-phosphoryl)serine. A helical transmembrane segment spans residues 2705 to 2725; it reads NTVFLTGSSGFIGIYILFYLI.

The cofactor is pantetheine 4'-phosphate.

The protein localises to the membrane. Its function is as follows. Probable polyketide synthase. In Dictyostelium discoideum (Social amoeba), this protein is Probable polyketide synthase 45 (pks45).